Reading from the N-terminus, the 184-residue chain is MPNTQSPYTAFAALLSSNGHPVSPAELHGLLIGRSCAGAGFEADAWLADAAGVLENEPEDNVRAALIGLQEMVKAELTGEDIAIVLLLPSDETPLTERATALGQWCQGFIAGFGLNAGGKDLSTDAKEVLQDLVAISQVQEALEESEDGESDYMEVMEYLRVAPLLLYTELAAPAAPAPKPSLH.

Belongs to the UPF0149 family.

This Pseudomonas putida (strain W619) protein is UPF0149 protein PputW619_5026.